The following is a 585-amino-acid chain: Potassium-transporting ATPase potassium-binding subunit (585 aa).

The next 12 helical transmembrane spans lie at 25–45, 84–104, 152–172, 194–214, 275–295, 307–327, 345–365, 368–388, 397–417, 437–457, 502–522, and 547–567; these read IIIF…SFYI, YFIN…LVIM, FVIT…SMAF, IFDL…LAGV, LEFV…GIVF, VIMF…YVGV, AIGV…STGA, GALV…LLLN, GVLN…LMVG, LSLV…LMIP, LDGV…LVIA, and LLLI…IIVL.

It belongs to the KdpA family. As to quaternary structure, the system is composed of three essential subunits: KdpA, KdpB and KdpC.

It is found in the cell membrane. Functionally, part of the high-affinity ATP-driven potassium transport (or Kdp) system, which catalyzes the hydrolysis of ATP coupled with the electrogenic transport of potassium into the cytoplasm. This subunit binds the extracellular potassium ions and delivers the ions to the membrane domain of KdpB through an intramembrane tunnel. In Thermoplasma volcanium (strain ATCC 51530 / DSM 4299 / JCM 9571 / NBRC 15438 / GSS1), this protein is Potassium-transporting ATPase potassium-binding subunit.